The primary structure comprises 294 residues: Keratin-like protein KRT222 (294 aa).

Residues 1 to 150 (MELSQLLNEI…RLLEQEEIRY (150 aa)) enclose the IF rod domain. A coiled-coil region spans residues 1–151 (MELSQLLNEI…LLEQEEIRYY (151 aa)).

This sequence belongs to the intermediate filament family.

This chain is Keratin-like protein KRT222 (Krt222), found in Mus musculus (Mouse).